Consider the following 397-residue polypeptide: Cystinosin (397 aa).

The signal sequence occupies residues 1–24 (MDFSTHRLTTLLLLLLATVALGNA). Residues 25–126 (QSSQLTVDSH…FVRVTVAKSR (102 aa)) lie on the Lumenal side of the membrane. Residues Asn43 and Asn86 are each glycosylated (N-linked (GlcNAc...) asparagine). The chain crosses the membrane as a helical span at residues 127–147 (ALIYTSIIFGWVYFVAWSVSF). The PQ-loop 1 domain occupies 132–187 (SIIFGWVYFVAWSVSFYPQIWSNYRRKSVEGLNFDFLALNIVGFTLYSMFNCGLYF). At 148–167 (YPQIWSNYRRKSVEGLNFDF) the chain is on the cytoplasmic side. Residues 168-188 (LALNIVGFTLYSMFNCGLYFI) traverse the membrane as a helical segment. Residues 189–210 (EDLQNEYEVRYPLGVNPVMLND) lie on the Lumenal side of the membrane. A helical membrane pass occupies residues 211–231 (VVFSLHAMFATCITILQCFFY). Topologically, residues 232-239 (QRAQQRVS) are cytoplasmic. Residues 240–260 (FIAYGILAIFAVVVVVSAGLA) traverse the membrane as a helical segment. The Lumenal segment spans residues 261–263 (GGS). The helical transmembrane segment at 264-284 (VIHWLDFLYYCSYVKLTITII) threads the bilayer. Residues 271-327 (LYYCSYVKLTITIIKYVPQALMNYRRKSTSGWSIGNILLDFTGGTLSMLQMILNAHN) form the PQ-loop 2 domain. Residues 285 to 302 (KYVPQALMNYRRKSTSGW) are Cytoplasmic-facing. Residues 303 to 323 (SIGNILLDFTGGTLSMLQMIL) form a helical membrane-spanning segment. Topologically, residues 324-340 (NAHNYDDWVSIFGDPTK) are lumenal. Residues 341–361 (FGLGLFSVLFDVFFMLQHYVF) form a helical membrane-spanning segment. Residues 362–397 (YRHSRESSSSDLTTVTDVQNRTNESPPPSEVTTEKY) are Cytoplasmic-facing. Positions 373–385 (LTTVTDVQNRTNE) are enriched in polar residues. The disordered stretch occupies residues 373 to 397 (LTTVTDVQNRTNESPPPSEVTTEKY).

Belongs to the cystinosin family.

Its subcellular location is the lysosome membrane. The catalysed reaction is L-cystine(out) + H(+)(out) = L-cystine(in) + H(+)(in). Cystine/H(+) symporter that mediates export of cystine, the oxidized dimer of cysteine, from lysosomes. Involved in cysteine homeostasis during periods of fasting, which indirectly regulates mTORC1-mediated signaling by supporting de novo CoA synthesis, the TCA cycle and amino acid metabolism during periods of food shortage. Important for maintaining autophagy, and for development and survival during periods of fasting. This chain is Cystinosin, found in Drosophila melanogaster (Fruit fly).